The primary structure comprises 319 residues: Pre T-cell antigen receptor alpha (319 aa).

The signal sequence occupies residues 1-16 (MAESWLLLLLALGCPA). Topologically, residues 17-160 (LPTEVTTLLR…LRGTRALVLR (144 aa)) are extracellular. Cysteines 58 and 118 form a disulfide. A glycan (N-linked (GlcNAc...) asparagine) is linked at Asn78. A helical membrane pass occupies residues 161-181 (LGALRLLLFKLLLLDVLLTCG). Residues 182-319 (RLHAPPAARG…PPADPSFPGG (138 aa)) are Cytoplasmic-facing. Over residues 189 to 207 (ARGDPAGASGPGAPSLPAP) the composition is skewed to low complexity. Residues 189–293 (ARGDPAGASG…VLRAWSSGPS (105 aa)) are disordered. The span at 260–271 (RRRRVHTRRPRR) shows a compositional bias: basic residues.

In terms of assembly, heterodimer with TCRB; disulfide linked. This heterodimer assembles with CD3 proteins into a signaling-competent pre-T-cell receptor complex. Interacts with RHBDD1.

It localises to the membrane. Its subcellular location is the cell membrane. Component of the pre-T-cell receptor complex (composed of PTCRA, TCRB and the CD3 complex) that has a crucial role in early T-cell development, particularly alpha-beta T cell differentiation. The chain is Pre T-cell antigen receptor alpha (PTCRA) from Bos taurus (Bovine).